Here is a 217-residue protein sequence, read N- to C-terminus: Cytidylate kinase (217 aa).

11 to 19 (GPAGAGKST) is an ATP binding site.

Belongs to the cytidylate kinase family. Type 1 subfamily.

Its subcellular location is the cytoplasm. It catalyses the reaction CMP + ATP = CDP + ADP. It carries out the reaction dCMP + ATP = dCDP + ADP. The protein is Cytidylate kinase of Clostridium perfringens (strain ATCC 13124 / DSM 756 / JCM 1290 / NCIMB 6125 / NCTC 8237 / Type A).